The primary structure comprises 24 residues: Brevinin-1BYc (24 aa).

A disulfide bond links cysteine 18 and cysteine 24.

Expressed by the skin glands.

It localises to the secreted. Antibacterial activity against Gram-positive bacterium S.aureus. Weak antifungal activity against C.albicans. The protein is Brevinin-1BYc of Rana boylii (Foothill yellow-legged frog).